A 98-amino-acid polypeptide reads, in one-letter code: NADH-ubiquinone oxidoreductase chain 4L (98 aa).

Transmembrane regions (helical) follow at residues Gln-2–Phe-22, Phe-26–Ile-46, and Phe-59–Val-79.

Belongs to the complex I subunit 4L family. As to quaternary structure, core subunit of respiratory chain NADH dehydrogenase (Complex I) which is composed of 45 different subunits.

The protein resides in the mitochondrion inner membrane. The catalysed reaction is a ubiquinone + NADH + 5 H(+)(in) = a ubiquinol + NAD(+) + 4 H(+)(out). Functionally, core subunit of the mitochondrial membrane respiratory chain NADH dehydrogenase (Complex I) which catalyzes electron transfer from NADH through the respiratory chain, using ubiquinone as an electron acceptor. Part of the enzyme membrane arm which is embedded in the lipid bilayer and involved in proton translocation. The polypeptide is NADH-ubiquinone oxidoreductase chain 4L (MT-ND4L) (Echinosorex gymnura (Moon rat)).